An 813-amino-acid polypeptide reads, in one-letter code: Ubiquitin carboxyl-terminal hydrolase 45 (813 aa).

The segment covering 1–14 (MRVKDPSKDLPEKG) has biased composition (basic and acidic residues). The disordered stretch occupies residues 1-27 (MRVKDPSKDLPEKGKRNKRPLLPHDED). Residues 1-62 (MRVKDPSKDL…AVAESLWSVC (62 aa)) are interaction with ERCC1. Phosphoserine occurs at positions 28 and 29. Residues 36-153 (LTCQHVSYAV…AQIVDFLQKH (118 aa)) form a UBP-type zinc finger. Positions 38, 40, 62, 65, 85, 88, 93, 101, 105, 114, 127, and 130 each coordinate Zn(2+). A USP domain is found at 191 to 812 (KGITNLGNTC…QAYLLFYERI (622 aa)). The Nucleophile role is filled by Cys200. Basic and acidic residues-rich tracts occupy residues 405–414 (LQETDQDHNK) and 450–466 (WPSE…KNDN). The segment at 405–552 (LQETDQDHNK…QAKETHGGEE (148 aa)) is disordered. Residues 472–488 (PASTLSTEASLNESLTD) show a composition bias toward polar residues. Residues Ser507 and Ser525 each carry the phosphoserine modification. The span at 521–533 (SRGDSCGHAEQHP) shows a compositional bias: basic and acidic residues. The active-site Proton acceptor is His745.

Belongs to the peptidase C19 family. Interacts with ERCC1. The catalytically active form interacts with SPDL1. Retina.

The protein resides in the photoreceptor inner segment. Its subcellular location is the cytoplasm. It localises to the nucleus. The catalysed reaction is Thiol-dependent hydrolysis of ester, thioester, amide, peptide and isopeptide bonds formed by the C-terminal Gly of ubiquitin (a 76-residue protein attached to proteins as an intracellular targeting signal).. Functionally, catalyzes the deubiquitination of SPDL1. Plays a role in the repair of UV-induced DNA damage via deubiquitination of ERCC1, promoting its recruitment to DNA damage sites. May be involved in the maintenance of photoreceptor function. May play a role in normal retinal development. Plays a role in cell migration. In Mus musculus (Mouse), this protein is Ubiquitin carboxyl-terminal hydrolase 45 (Usp45).